A 226-amino-acid polypeptide reads, in one-letter code: MAQTDVLNVTGNKIGTVELKDSIFNIEPNYDVMFRYVDMQLANRRAGTAKAKTRSEVSGGGRKPWPQKHTGRARTGSIRNPLWRHGGVIHGPKPKDWSKKLNKKMKKLALKSALSLRFKEGNLVVVDDIKLDRPKTKQMREIVKNLGLSDAKKVLFILPWKRDEYENVKLSGRNIPGVKVIIADNPGNLVNGRSSNIDGLNVFDILNHEKIVFTVDLVRKIEEVLG.

Residues 47-74 (GTAKAKTRSEVSGGGRKPWPQKHTGRAR) are disordered.

It belongs to the universal ribosomal protein uL4 family. Part of the 50S ribosomal subunit.

Its function is as follows. One of the primary rRNA binding proteins, this protein initially binds near the 5'-end of the 23S rRNA. It is important during the early stages of 50S assembly. It makes multiple contacts with different domains of the 23S rRNA in the assembled 50S subunit and ribosome. In terms of biological role, forms part of the polypeptide exit tunnel. The chain is Large ribosomal subunit protein uL4 from Kosmotoga olearia (strain ATCC BAA-1733 / DSM 21960 / TBF 19.5.1).